The sequence spans 70 residues: Putative membrane protein insertion efficiency factor (70 aa).

The protein belongs to the UPF0161 family.

The protein localises to the cell membrane. Its function is as follows. Could be involved in insertion of integral membrane proteins into the membrane. The sequence is that of Putative membrane protein insertion efficiency factor from Lachnoclostridium phytofermentans (strain ATCC 700394 / DSM 18823 / ISDg) (Clostridium phytofermentans).